The primary structure comprises 489 residues: FK506-binding protein 4 (489 aa).

Disordered regions lie at residues 40 to 157 and 199 to 378; these read PDET…GLEL and GNYV…TTGT. Over residues 66–88 the composition is skewed to acidic residues; the sequence is MDIDESDDDYEEDSEEDSDDEEI. The segment covering 93 to 109 has biased composition (basic and acidic residues); sequence SDKEKARKLKEAAALKE. 3 stretches are compositionally biased toward acidic residues: residues 110–125, 143–157, and 208–250; these read LEDE…DDEN, TDDD…GLEL, and GPSE…DELD. Composition is skewed to basic and acidic residues over residues 267–282, 292–303, and 328–353; these read APKL…RTAD, MMAKDGKAKGAD, and EQKK…EAKK. Polar residues predominate over residues 362–378; it reads QGPTPSGQKPGETTTGT. The PPIase FKBP-type domain maps to 406-489; that stretch reads VAMRYIGKLE…IFDVKLLEIK (84 aa).

It belongs to the FKBP-type PPIase family. FKBP3/4 subfamily. As to quaternary structure, binds to histones H3 and H4.

It is found in the nucleus. The enzyme catalyses [protein]-peptidylproline (omega=180) = [protein]-peptidylproline (omega=0). With respect to regulation, inhibited by both FK506 and rapamycin. PPIase that acts as a histone chaperone. Histone proline isomerase that increases the rate of cis-trans isomerization at prolines on the histone H3 N-terminal tail. Proline isomerization influences H3 methylation thereby regulating gene expression. The polypeptide is FK506-binding protein 4 (fpr4) (Aspergillus fumigatus (strain ATCC MYA-4609 / CBS 101355 / FGSC A1100 / Af293) (Neosartorya fumigata)).